The primary structure comprises 270 residues: Glucan endo-1,3-beta-glucosidase (270 aa).

The N-terminal stretch at 1–18 (MNAFTFPLLLAFCAFAHG) is a signal peptide. Residues 22–270 (LDWEDEFNGG…VEYVKKWTWN (249 aa)) enclose the GH16 domain. Glu137 acts as the Nucleophile in catalysis. Glu142 serves as the catalytic Proton donor.

This sequence belongs to the glycosyl hydrolase 16 family.

It is found in the secreted. The catalysed reaction is Hydrolysis of (1-&gt;3)-beta-D-glucosidic linkages in (1-&gt;3)-beta-D-glucans.. With respect to regulation, ca(2+) does not affect the enzyme activity nor the thermostability. Other cations, such as Mg(2+), Mn(2+), Cu(2+), Zn(2+), Ag(+) or Hg(2+) do not cause any serious adverse effect on the activity. Also no significant change in the activity in response to the addition of 1 mM EDTA. Functionally, hydrolyzes laminarin majorily to glucose (G1), laminaribiose (L2), laminaritriose (L3), laminaritetraose (L4) and laminaripentaose (L5). Hydrolyzes laminarioligosaccharides L3, L4, L5 and laminarihexaose (L6) to G1, L2 and L3. Hardly hydrolyzes L2. Does not hydrolyze lichenan, pustulan, carboxymethyl cellulose, locust bean gum or soluble starch. This is Glucan endo-1,3-beta-glucosidase from Cryptopygus antarcticus (Antarctic springtail).